A 249-amino-acid polypeptide reads, in one-letter code: SRR1-like protein (249 aa).

The disordered stretch occupies residues 1–40 (MAAAALEPWSAVAPRRRKRAAGRRPRPGEGPRAEPEADGE). The segment covering 14–25 (PRRRKRAAGRRP) has biased composition (basic residues). The span at 26-40 (RPGEGPRAEPEADGE) shows a compositional bias: basic and acidic residues.

This sequence belongs to the SRR1 family.

It is found in the cytoplasm. Its function is as follows. Plays a role in the regulation of heme biosynthesis and in the regulation of the expression of core clock genes. In Mus musculus (Mouse), this protein is SRR1-like protein (Srrd).